Reading from the N-terminus, the 360-residue chain is Phenylalanine--tRNA ligase alpha subunit (360 aa).

Glu260 contributes to the Mg(2+) binding site.

The protein belongs to the class-II aminoacyl-tRNA synthetase family. Phe-tRNA synthetase alpha subunit type 1 subfamily. In terms of assembly, tetramer of two alpha and two beta subunits. It depends on Mg(2+) as a cofactor.

It is found in the cytoplasm. It catalyses the reaction tRNA(Phe) + L-phenylalanine + ATP = L-phenylalanyl-tRNA(Phe) + AMP + diphosphate + H(+). The sequence is that of Phenylalanine--tRNA ligase alpha subunit from Bartonella tribocorum (strain CIP 105476 / IBS 506).